The following is a 259-amino-acid chain: MSSSKLLKYGSDDLQTIRVYRHDSGNHLSIIFIHGGAWRDPRNTFNDFEELVGKLPSTINTFGINYRLSPAVKHPAHLEDVVSAIEYLAKNYKVENVGLVGHSVGATLALQILNYKTILPGLERPLGIKMKFLVFLDGIYDVPKLVEEYPTYSSFVNEAFKTKQDYMRATPVSSEMPQFDISVEKCVILLVQSTEDELLSVQQTELMADFLQAKSIPFEKHLGAFGAHEQVYRHHKVAKLITDAIGANLDGLVRARPQN.

The HGGXW signature appears at 34-38 (HGGAW). Ser103 functions as the Nucleophile in the catalytic mechanism. Residues Asp196 and His228 contribute to the active site.

The protein belongs to the kynurenine formamidase family. In terms of assembly, homodimer.

It carries out the reaction N-formyl-L-kynurenine + H2O = L-kynurenine + formate + H(+). The protein operates within amino-acid degradation; L-tryptophan degradation via kynurenine pathway; L-kynurenine from L-tryptophan: step 2/2. In terms of biological role, catalyzes the hydrolysis of N-formyl-L-kynurenine to L-kynurenine, the second step in the kynurenine pathway of tryptophan degradation. Kynurenine may be further oxidized to nicotinic acid, NAD(H) and NADP(H). Required for elimination of toxic metabolites. This chain is Kynurenine formamidase, found in Meyerozyma guilliermondii (strain ATCC 6260 / CBS 566 / DSM 6381 / JCM 1539 / NBRC 10279 / NRRL Y-324) (Yeast).